A 67-amino-acid chain; its full sequence is Large ribosomal subunit protein uL29 (67 aa).

It belongs to the universal ribosomal protein uL29 family.

The polypeptide is Large ribosomal subunit protein uL29 (Alkaliphilus oremlandii (strain OhILAs) (Clostridium oremlandii (strain OhILAs))).